A 213-amino-acid chain; its full sequence is Adenylate kinase (213 aa).

Position 10–15 (10–15) interacts with ATP; the sequence is GSGKGT. The segment at 30–59 is NMP; the sequence is SVGDLLRNIISSSSELGKKIKGTVESGNLI. Residues Arg-36, 57–59, 83–86, and Gln-90 contribute to the AMP site; these read NLI and GFPR. The interval 125–160 is LID; sequence NRLACLDCKNIYSVSSFKSTTCAKCKSTRLEKRIDD. Arg-126 provides a ligand contact to ATP. The Zn(2+) site is built by Cys-129 and Cys-132. An ATP-binding site is contributed by 135-136; that stretch reads IY. Zn(2+) contacts are provided by Cys-146 and Cys-149. AMP-binding residues include Arg-157 and Arg-169. Leu-195 serves as a coordination point for ATP.

It belongs to the adenylate kinase family. In terms of assembly, monomer.

It is found in the cytoplasm. The catalysed reaction is AMP + ATP = 2 ADP. The protein operates within purine metabolism; AMP biosynthesis via salvage pathway; AMP from ADP: step 1/1. Functionally, catalyzes the reversible transfer of the terminal phosphate group between ATP and AMP. Plays an important role in cellular energy homeostasis and in adenine nucleotide metabolism. The sequence is that of Adenylate kinase from Wolbachia pipientis wMel.